We begin with the raw amino-acid sequence, 144 residues long: Granulocyte-macrophage colony-stimulating factor (144 aa).

The N-terminal stretch at 1–17 (MWLQGLLLLGTVACSIS) is a signal peptide. O-linked (GalNAc...) serine glycosylation occurs at S24. T27 carries O-linked (GalNAc...) threonine glycosylation. 2 N-linked (GlcNAc...) asparagine glycosylation sites follow: N44 and N54. Cystine bridges form between C71–C113 and C105–C138.

Belongs to the GM-CSF family. As to quaternary structure, monomer. The signaling GM-CSF receptor complex is a dodecamer of two head-to-head hexamers of two alpha, two beta, and two ligand subunits.

Its subcellular location is the secreted. In terms of biological role, cytokine that stimulates the growth and differentiation of hematopoietic precursor cells from various lineages, including granulocytes, macrophages, eosinophils and erythrocytes. The chain is Granulocyte-macrophage colony-stimulating factor (CSF2) from Chlorocebus aethiops (Green monkey).